A 128-amino-acid chain; its full sequence is Infection structure-specific protein 56 (128 aa).

Polar residues-rich tracts occupy residues 27–36 and 87–101; these read HATYPQSQPH and TSIS…DSQS. 2 disordered regions span residues 27 to 48 and 86 to 128; these read HATY…AVPS and GTSI…STSA. A compositionally biased stretch (basic and acidic residues) spans 115 to 128; that stretch reads KDAKKELKDPSTSA.

Functionally, general role in the development of germlings including formation of the infection structures. This Uromyces appendiculatus (Rust fungus) protein is Infection structure-specific protein 56 (INF56).